The sequence spans 345 residues: Meiotic recombination protein rec12 (345 aa).

The Topo IIA-type catalytic domain occupies 5–137; it reads DKKKVVRSWI…LNVEASAKGL (133 aa). Tyr-98 serves as the catalytic O-(5'-phospho-DNA)-tyrosine intermediate. Mg(2+) contacts are provided by Glu-179 and Asp-229.

This sequence belongs to the TOP6A family. As to quaternary structure, component of the DSB catalytic core (DSBC) complex, composed of at least rec12, rec6 and rec14. The complex interacts with mde2. Mg(2+) is required as a cofactor.

The protein localises to the cytoplasm. It is found in the nucleus. The catalysed reaction is ATP-dependent breakage, passage and rejoining of double-stranded DNA.. Its function is as follows. Required for formation of the double-strand breaks (DSBs) that initiate meiotic recombination. Required for crossover recombination and chiasmatic segregation of chromosomes during meiosis I. Also involved in the faithful equational segregation of chromosomes during meiosis II. The sequence is that of Meiotic recombination protein rec12 from Schizosaccharomyces pombe (strain 972 / ATCC 24843) (Fission yeast).